The sequence spans 266 residues: Putative hydro-lyase Jann_2570 (266 aa).

Belongs to the D-glutamate cyclase family.

This is Putative hydro-lyase Jann_2570 from Jannaschia sp. (strain CCS1).